Consider the following 654-residue polypeptide: Protein THALLO (654 aa).

A compositionally biased stretch (basic residues) spans Met-1–Lys-16. 3 disordered regions span residues Met-1–Glu-23, Lys-35–Glu-145, and Ser-164–His-212. The Nuclear localization signal 1 signature appears at Gly-2–Lys-9. Acidic residues-rich tracts occupy residues Val-44 to Val-56, Gly-64 to Glu-82, and Gly-103 to Lys-114. Residues Leu-140–Glu-160 adopt a coiled-coil conformation. The span at Gly-171–Asp-181 shows a compositional bias: acidic residues. Residues Arg-182 to His-212 show a composition bias toward basic and acidic residues. The stretch at Leu-243–Lys-263 forms a coiled coil. Disordered stretches follow at residues Ser-362–Asp-397, Val-470–Gly-492, and Lys-509–Met-654. Basic and acidic residues predominate over residues Ser-364–Lys-387. The segment covering Ser-524–Asp-546 has biased composition (acidic residues). Over residues Val-552–Ala-561 the composition is skewed to basic residues. Positions Ser-588–Arg-599 are enriched in polar residues. A Nuclear localization signal 2 motif is present at residues Pro-608–Asn-615. The segment covering Asn-645–Met-654 has biased composition (polar residues).

Belongs to the SAS10 family. In terms of assembly, interacts with NUCL1, NUCL2, JMJ14, NOF1 and MPP10 in the nucleus. In terms of tissue distribution, mainly present in tissues undergoing rapid cellular growth and differentiation. Mostly expressed in shoots and flowers, and, to a lower extent, in leaves, siliques, roots and seedlings.

It localises to the nucleus. It is found in the nucleolus. Its function is as follows. Essential protein during embryogenesis. Involved both in gene transcription regulation and in processing events critical for proper rRNA biogenesis and nucleolar organization during reproduction; contributes to pre-rRNA processing at the 5' external transcribed spacer. Binds RNA. The protein is Protein THALLO of Arabidopsis thaliana (Mouse-ear cress).